The following is a 619-amino-acid chain: Grainyhead-like protein 2 homolog (619 aa).

Residues 1–90 (MSQETDNKRL…KINEGHEDQD (90 aa)) form a transcription activation region. Disordered stretches follow at residues 86–108 (HEDQ…STGE), 125–147 (NDTV…PQPA), and 423–444 (EERK…CNNS). Over residues 99–108 (ETPSNLSTGE) the composition is skewed to polar residues. Residues 239–477 (ASSTFQYTLE…DLDVQPVLFI (239 aa)) enclose the Grh/CP2 DB domain.

This sequence belongs to the grh/CP2 family. Grainyhead subfamily.

The protein resides in the nucleus. The protein localises to the membrane. Functionally, transcription factor playing an important role in primary neurulation and in epithelial development. Binds directly to the consensus DNA sequence 5'-AACCGGTT-3' acting as an activator and repressor on distinct target genes. This Xenopus tropicalis (Western clawed frog) protein is Grainyhead-like protein 2 homolog (grhl2).